The sequence spans 243 residues: MGHKIHPNGLRLGITQEHRSRWYASSKTYPTLLQEDDRIRGFIQKKYASAGISDVLIARKADQLEVELKTARPGVIVGRQGSGIEELRSGIQKTIGDRSRQVRINVVEIERVDADAHLLAEYIAQQLEKRVAFRRTIRMAVQRAQRAGVLGLKIQVGGRLNGAEIARSEWTREGRVPLHTLRAEIDYANKTANTTYGVLGIKVWVFKGEVLSKEDQPLPVGASPRRKGSRRPQQFEDRSNDGK.

The 72-residue stretch at 39 to 110 folds into the KH type-2 domain; sequence IRGFIQKKYA…QVRINVVEIE (72 aa). The tract at residues 215–243 is disordered; it reads DQPLPVGASPRRKGSRRPQQFEDRSNDGK. Basic and acidic residues predominate over residues 233 to 243; the sequence is QQFEDRSNDGK.

The protein belongs to the universal ribosomal protein uS3 family. In terms of assembly, part of the 30S ribosomal subunit. Forms a tight complex with proteins S10 and S14.

Binds the lower part of the 30S subunit head. Binds mRNA in the 70S ribosome, positioning it for translation. In Prochlorococcus marinus (strain MIT 9211), this protein is Small ribosomal subunit protein uS3.